Here is a 151-residue protein sequence, read N- to C-terminus: UPF0756 membrane protein lhv_0995 (151 aa).

The next 5 membrane-spanning stretches (helical) occupy residues 4-24, 25-45, 52-72, 78-98, and 115-135; these read WLFL…SLII, ATGV…LPVI, WGVT…QIGF, TFKS…AILS, and LVLG…GPVI.

This sequence belongs to the UPF0756 family.

The protein resides in the cell membrane. The chain is UPF0756 membrane protein lhv_0995 from Lactobacillus helveticus (strain DPC 4571).